The chain runs to 157 residues: uncharacterized protein (157 aa).

The N-acetyltransferase domain maps to 3–157 (FTLEDMTEEE…TNIRMRKQLC (155 aa)).

It belongs to the acetyltransferase family.

This is an uncharacterized protein from Bacillus subtilis (strain 168).